Here is a 209-residue protein sequence, read N- to C-terminus: Thiamine-phosphate synthase 1 (209 aa).

Residues 39 to 43 (QFREK) and asparagine 74 contribute to the 4-amino-2-methyl-5-(diphosphooxymethyl)pyrimidine site. Positions 75 and 94 each coordinate Mg(2+). Residue serine 112 coordinates 4-amino-2-methyl-5-(diphosphooxymethyl)pyrimidine. 2-[(2R,5Z)-2-carboxy-4-methylthiazol-5(2H)-ylidene]ethyl phosphate is bound at residue 138 to 140 (TQS). Lysine 141 is a binding site for 4-amino-2-methyl-5-(diphosphooxymethyl)pyrimidine. Residues glycine 170 and 190–191 (IS) contribute to the 2-[(2R,5Z)-2-carboxy-4-methylthiazol-5(2H)-ylidene]ethyl phosphate site.

Belongs to the thiamine-phosphate synthase family. Mg(2+) is required as a cofactor.

It carries out the reaction 2-[(2R,5Z)-2-carboxy-4-methylthiazol-5(2H)-ylidene]ethyl phosphate + 4-amino-2-methyl-5-(diphosphooxymethyl)pyrimidine + 2 H(+) = thiamine phosphate + CO2 + diphosphate. The enzyme catalyses 2-(2-carboxy-4-methylthiazol-5-yl)ethyl phosphate + 4-amino-2-methyl-5-(diphosphooxymethyl)pyrimidine + 2 H(+) = thiamine phosphate + CO2 + diphosphate. It catalyses the reaction 4-methyl-5-(2-phosphooxyethyl)-thiazole + 4-amino-2-methyl-5-(diphosphooxymethyl)pyrimidine + H(+) = thiamine phosphate + diphosphate. It participates in cofactor biosynthesis; thiamine diphosphate biosynthesis; thiamine phosphate from 4-amino-2-methyl-5-diphosphomethylpyrimidine and 4-methyl-5-(2-phosphoethyl)-thiazole: step 1/1. In terms of biological role, condenses 4-methyl-5-(beta-hydroxyethyl)thiazole monophosphate (THZ-P) and 2-methyl-4-amino-5-hydroxymethyl pyrimidine pyrophosphate (HMP-PP) to form thiamine monophosphate (TMP). In Streptococcus pneumoniae serotype 4 (strain ATCC BAA-334 / TIGR4), this protein is Thiamine-phosphate synthase 1.